The chain runs to 136 residues: Protein NrdI (136 aa).

This sequence belongs to the NrdI family.

In terms of biological role, probably involved in ribonucleotide reductase function. The sequence is that of Protein NrdI from Shigella dysenteriae serotype 1 (strain Sd197).